Consider the following 92-residue polypeptide: Small ribosomal subunit protein uS19 (92 aa).

This sequence belongs to the universal ribosomal protein uS19 family.

Its function is as follows. Protein S19 forms a complex with S13 that binds strongly to the 16S ribosomal RNA. The chain is Small ribosomal subunit protein uS19 from Polaromonas sp. (strain JS666 / ATCC BAA-500).